A 430-amino-acid polypeptide reads, in one-letter code: Type 3 secretion system ATPase (430 aa).

162 to 167 (GCGKTF) contacts ATP.

The protein belongs to the ATPase alpha/beta chains family. T3SS ATPase subfamily. In terms of assembly, the core secretion machinery of the T3SS is composed of approximately 20 different proteins, including cytoplasmic components, a base, an export apparatus and a needle. This subunit is part of the cytosolic complex. Forms homohexamers. Interacts directly with MxiN/SctL (stator protein) and Spa13/SctO (stalk protein). Can form a soluble complex with Spa33/SctQ, MxiN/SctL and MxiK/SctK.

The protein resides in the cytoplasm. The catalysed reaction is ATP + H2O + cellular proteinSide 1 = ADP + phosphate + cellular proteinSide 2.. Oligomerization increases ATPase activity. Monomeric forms exhibit low-level ATPase activity by forming short-lived oligomers with active site contributions from at least two protomers. In contrast, oligomers exhibit enhanced ATP hydrolysis rates that likely result from multiple preformed active sites within the oligomeric complex. Oligomerization is important for both enzyme activation and T3SS function. Activity is regulated by MxiN/SctL, which differentially regulates the activity of the monomer and the oligomer: it up-regulates the ATPase activity of the monomer, while it down-regulates the activity of the oligomer. In terms of biological role, ATPase component of the type III secretion system (T3SS), also called injectisome, which is used to inject bacterial effector proteins into eukaryotic host cells. Acts as a molecular motor to provide the energy that is required for the export of proteins. Required for type III secretion apparatus (T3SA) formation, proper protein secretion, host cell invasion and virulence. May play a critical role in T3SS substrate recognition, disassembly of the effector/chaperone complex and unfolding of the effector in an ATP-dependent manner prior to secretion. This Shigella flexneri protein is Type 3 secretion system ATPase.